The primary structure comprises 630 residues: MDGESQTSKLSCEHMYSWYFTREELEKFSPSRKDGITEIMESEIRQLYCSFIRDVGIRLKLPQMTIATAIMFCHRFYLYQSLAKNGWQTIATVCIFLASKVEDTPCPLDQVIRVAYGTMYRRDPATARRIHQKDVFEKQKALILTGERLVLTTVRFDFNIQHPYRPLLDAMEKLGISQKEVKQVAWNFVNDWLKTTLCLQYKPQYIAAGSLYLAAKFQNVKLPVHGGHVWWHQFDVAPKPLEAVLQQMREMVHMKAKLFAHPSPAKQKEVLFEGMLLISNSPDSVLTQSSLSVSSSSPEIGDPNDHLQVDSSQDIVHIEDRSKSYPERNLSNLTADMNNPGKTHNKESLDQALKIKHGGLISCNQQIPLDAIAKIDSSTAKCVEQNIGICCSSSNTFNGKILNPFSISQRSGDKTKLCSEGGSSLTDVDSKSTQSVEPPTTICNHTSDSLNVDSLCSDQRLANSTAGTTEKASFVLPVQIKVDHLCVERKKVDVARIKDLLMKRKRRRERQGRCIPSVDLSEEAWIERELESGIVFKKVDHVVASYDLSDEGWIERELESGIVIGQKNDQPVSLDGLTEDDWIERELESGIIVEPGPAGKKLKSKLLSEGHEIMNSRWEINGKSMQNQVT.

The segment covering 288–297 (QSSLSVSSSS) has biased composition (low complexity). Disordered regions lie at residues 288–313 (QSSLSVSSSSPEIGDPNDHLQVDSSQ) and 410–439 (RSGDKTKLCSEGGSSLTDVDSKSTQSVEPP). Residues 421–439 (GGSSLTDVDSKSTQSVEPP) show a composition bias toward polar residues.

It belongs to the cyclin family. Cyclin T subfamily.

This is Cyclin-T1-2 (CYCT1_2) from Oryza sativa subsp. japonica (Rice).